A 136-amino-acid polypeptide reads, in one-letter code: uncharacterized protein (136 aa).

Positions 1–100 (MQSREPSGWR…PCSGGPDRPE (100 aa)) are disordered. Over residues 66 to 75 (RLLRWHHRVP) the composition is skewed to basic residues.

This is an uncharacterized protein from Homo sapiens (Human).